We begin with the raw amino-acid sequence, 286 residues long: Putative thiosulfate sulfurtransferase (286 aa).

The Rhodanese 1 domain maps to 27 to 134; it reads DDPAYRLVEV…WVDNDYPTTD (108 aa). Glycyl lysine isopeptide (Lys-Gly) (interchain with G-Cter in SAMP2) cross-links involve residues K162 and K166. The Rhodanese 2 domain occupies 164 to 283; it reads VDKGLPLVDV…WGNLVGAPVE (120 aa). The active-site Cysteine persulfide intermediate is the C242. R247 is a binding site for substrate.

It catalyses the reaction thiosulfate + hydrogen cyanide = thiocyanate + sulfite + 2 H(+). Functionally, may be a sulfotransferase involved in the formation of thiosulfate. The chain is Putative thiosulfate sulfurtransferase (tssA) from Haloferax volcanii (strain ATCC 29605 / DSM 3757 / JCM 8879 / NBRC 14742 / NCIMB 2012 / VKM B-1768 / DS2) (Halobacterium volcanii).